The following is a 262-amino-acid chain: tRNA pseudouridine synthase A 2 (262 aa).

The Nucleophile role is filled by D66. Y125 lines the substrate pocket.

Belongs to the tRNA pseudouridine synthase TruA family. In terms of assembly, homodimer.

It carries out the reaction uridine(38/39/40) in tRNA = pseudouridine(38/39/40) in tRNA. Functionally, formation of pseudouridine at positions 38, 39 and 40 in the anticodon stem and loop of transfer RNAs. In Protochlamydia amoebophila (strain UWE25), this protein is tRNA pseudouridine synthase A 2.